The following is a 152-amino-acid chain: Ribosome maturation factor RimP (152 aa).

It belongs to the RimP family.

It localises to the cytoplasm. Functionally, required for maturation of 30S ribosomal subunits. The protein is Ribosome maturation factor RimP of Fervidobacterium nodosum (strain ATCC 35602 / DSM 5306 / Rt17-B1).